Here is a 647-residue protein sequence, read N- to C-terminus: Exoribonuclease 2 (647 aa).

Residues 190–519 enclose the RNB domain; that stretch reads REDLTSLPFV…NHRLLKAIIK (330 aa). In terms of domain architecture, S1 motif spans 564–646; sequence EQRFSAEVID…ETRSIVARPV (83 aa).

It belongs to the RNR ribonuclease family. RNase II subfamily.

The protein localises to the cytoplasm. It catalyses the reaction Exonucleolytic cleavage in the 3'- to 5'-direction to yield nucleoside 5'-phosphates.. In terms of biological role, involved in mRNA degradation. Hydrolyzes single-stranded polyribonucleotides processively in the 3' to 5' direction. This chain is Exoribonuclease 2, found in Erwinia tasmaniensis (strain DSM 17950 / CFBP 7177 / CIP 109463 / NCPPB 4357 / Et1/99).